A 305-amino-acid polypeptide reads, in one-letter code: tRNA dimethylallyltransferase (305 aa).

11–18 (GPTAVGKT) lines the ATP pocket. A substrate-binding site is contributed by 13–18 (TAVGKT). Positions 36-39 (DSMQ) are interaction with substrate tRNA.

Belongs to the IPP transferase family. Monomer. It depends on Mg(2+) as a cofactor.

It carries out the reaction adenosine(37) in tRNA + dimethylallyl diphosphate = N(6)-dimethylallyladenosine(37) in tRNA + diphosphate. Catalyzes the transfer of a dimethylallyl group onto the adenine at position 37 in tRNAs that read codons beginning with uridine, leading to the formation of N6-(dimethylallyl)adenosine (i(6)A). The protein is tRNA dimethylallyltransferase of Listeria monocytogenes serotype 4a (strain HCC23).